Here is a 160-residue protein sequence, read N- to C-terminus: Probable transcriptional regulator YgiV (160 aa).

Its function is as follows. Represses expression of mcbR. This is Probable transcriptional regulator YgiV (ygiV) from Escherichia coli O157:H7.